Here is a 702-residue protein sequence, read N- to C-terminus: Flagellar operon control protein UmoB (702 aa).

5 helical membrane passes run 4–24 (SVII…FLFF), 204–224 (GFWN…ALMM), 227–247 (VFLP…LFLI), 343–363 (IIFV…QPLS), and 656–676 (GNTL…FFII).

Belongs to the IgaA family.

It localises to the cell inner membrane. Up-regulator of flagellar flhDC master operon. The polypeptide is Flagellar operon control protein UmoB (umoB) (Proteus mirabilis).